We begin with the raw amino-acid sequence, 197 residues long: Ribosomal RNA large subunit methyltransferase E (197 aa).

Positions 50, 52, 70, 88, and 111 each coordinate S-adenosyl-L-methionine. The active-site Proton acceptor is the lysine 151.

The protein belongs to the class I-like SAM-binding methyltransferase superfamily. RNA methyltransferase RlmE family.

Its subcellular location is the cytoplasm. The catalysed reaction is uridine(2552) in 23S rRNA + S-adenosyl-L-methionine = 2'-O-methyluridine(2552) in 23S rRNA + S-adenosyl-L-homocysteine + H(+). Functionally, specifically methylates the uridine in position 2552 of 23S rRNA at the 2'-O position of the ribose in the fully assembled 50S ribosomal subunit. The polypeptide is Ribosomal RNA large subunit methyltransferase E (Syntrophobacter fumaroxidans (strain DSM 10017 / MPOB)).